A 1394-amino-acid chain; its full sequence is Adhesion and penetration protein autotransporter (1394 aa).

Positions Met1–Ala25 are cleaved as a signal peptide. The Peptidase S6 domain maps to Gly26–Glu286. Residue Ser243 is part of the active site. Disordered regions lie at residues Ala848–Ser870 and Thr995–Thr1027. The Autotransporter domain maps to Val1140–Trp1394.

The protein resides in the periplasm. The protein localises to the secreted. Its subcellular location is the cell surface. It is found in the cell outer membrane. In terms of biological role, probable protease; promotes adherence and invasion by directly binding to a host cell structure. This Haemophilus influenzae protein is Adhesion and penetration protein autotransporter (hap).